The sequence spans 431 residues: Adenylosuccinate synthetase (431 aa).

GTP is bound by residues 13–19 and 41–43; these read GDEGKGK and GHT. Catalysis depends on Asp-14, which acts as the Proton acceptor. 2 residues coordinate Mg(2+): Asp-14 and Gly-41. IMP contacts are provided by residues 14–17, 39–42, Thr-130, Arg-144, Gln-225, Thr-240, and Arg-304; these read DEGK and NAGH. The active-site Proton donor is the His-42. 300-306 is a substrate binding site; that stretch reads ATTGRKR. Residues Arg-306, 332 to 334, and 415 to 417 each bind GTP; these read KLD and STG.

It belongs to the adenylosuccinate synthetase family. In terms of assembly, homodimer. Mg(2+) serves as cofactor.

The protein localises to the cytoplasm. The enzyme catalyses IMP + L-aspartate + GTP = N(6)-(1,2-dicarboxyethyl)-AMP + GDP + phosphate + 2 H(+). It functions in the pathway purine metabolism; AMP biosynthesis via de novo pathway; AMP from IMP: step 1/2. In terms of biological role, plays an important role in the de novo pathway of purine nucleotide biosynthesis. Catalyzes the first committed step in the biosynthesis of AMP from IMP. The chain is Adenylosuccinate synthetase from Shewanella woodyi (strain ATCC 51908 / MS32).